Reading from the N-terminus, the 163-residue chain is Protein-export protein SecB (163 aa).

Belongs to the SecB family. As to quaternary structure, homotetramer, a dimer of dimers. One homotetramer interacts with 1 SecA dimer.

The protein resides in the cytoplasm. In terms of biological role, one of the proteins required for the normal export of preproteins out of the cell cytoplasm. It is a molecular chaperone that binds to a subset of precursor proteins, maintaining them in a translocation-competent state. It also specifically binds to its receptor SecA. This chain is Protein-export protein SecB, found in Brucella anthropi (strain ATCC 49188 / DSM 6882 / CCUG 24695 / JCM 21032 / LMG 3331 / NBRC 15819 / NCTC 12168 / Alc 37) (Ochrobactrum anthropi).